The chain runs to 92 residues: Small ribosomal subunit protein bS20 (92 aa).

It belongs to the bacterial ribosomal protein bS20 family.

Functionally, binds directly to 16S ribosomal RNA. This Magnetococcus marinus (strain ATCC BAA-1437 / JCM 17883 / MC-1) protein is Small ribosomal subunit protein bS20.